Reading from the N-terminus, the 260-residue chain is 14-3-3 protein 4 (260 aa).

Residues 238–260 are disordered; that stretch reads DNADDVGDDIKEASKPESGEGQQ. Positions 245–260 are enriched in basic and acidic residues; that stretch reads DDIKEASKPESGEGQQ.

This sequence belongs to the 14-3-3 family. In terms of assembly, homodimer.

The chain is 14-3-3 protein 4 (TFT4) from Solanum lycopersicum (Tomato).